The sequence spans 328 residues: Carbonic anhydrase-related protein 10 (328 aa).

The Alpha-carbonic anhydrase domain maps to 31–301 (GWWAYKEVVQ…LNNRCIRTNI (271 aa)).

It belongs to the alpha-carbonic anhydrase family.

In terms of biological role, does not have a catalytic activity. The protein is Carbonic anhydrase-related protein 10 (CA10) of Bos taurus (Bovine).